Reading from the N-terminus, the 124-residue chain is Probable glycine cleavage system H protein (124 aa).

In terms of domain architecture, Lipoyl-binding spans 22–104 (TGRVGISEFA…FGDGWLVEID (83 aa)). An N6-lipoyllysine modification is found at Lys63.

The protein belongs to the GcvH family. As to quaternary structure, the glycine cleavage system is composed of four proteins: P, T, L and H. Requires (R)-lipoate as cofactor.

Its function is as follows. The glycine cleavage system catalyzes the degradation of glycine. The H protein shuttles the methylamine group of glycine from the P protein to the T protein. The sequence is that of Probable glycine cleavage system H protein from Halobacterium salinarum (strain ATCC 700922 / JCM 11081 / NRC-1) (Halobacterium halobium).